The primary structure comprises 113 residues: Ribonuclease P protein component (113 aa).

It belongs to the RnpA family. As to quaternary structure, consists of a catalytic RNA component (M1 or rnpB) and a protein subunit.

It carries out the reaction Endonucleolytic cleavage of RNA, removing 5'-extranucleotides from tRNA precursor.. RNaseP catalyzes the removal of the 5'-leader sequence from pre-tRNA to produce the mature 5'-terminus. It can also cleave other RNA substrates such as 4.5S RNA. The protein component plays an auxiliary but essential role in vivo by binding to the 5'-leader sequence and broadening the substrate specificity of the ribozyme. The polypeptide is Ribonuclease P protein component (Vesicomyosocius okutanii subsp. Calyptogena okutanii (strain HA)).